A 1032-amino-acid chain; its full sequence is Integrin alpha-4 (1032 aa).

The N-terminal stretch at 1–34 is a signal peptide; the sequence is MIRDLGKVGKVSLLLDHIWTGILLYTVILTPADC. Residues 35 to 974 are Extracellular-facing; the sequence is YNIDESSPML…LHNLKPKKHV (940 aa). FG-GAP repeat units lie at residues 36 to 100, 113 to 177, 186 to 237, 238 to 291, 292 to 351, 353 to 411, and 415 to 477; these read NIDE…PNRT, KCGK…TELS, DHVR…TIKS, YVDL…EKQL, TILF…GAME, LKFE…GITP, and QRLQ…LPST. N-linked (GlcNAc...) asparagine glycans are attached at residues N81 and N98. 3 cysteine pairs are disulfide-bonded: C91–C101, C144–C165, and C183–C198. N229 carries an N-linked (GlcNAc...) asparagine glycan. Ca(2+) contacts are provided by D314, N316, D318, L320, D322, D376, D378, D380, D384, D438, D440, N442, Y444, and D446. N-linked (GlcNAc...) asparagine glycosylation is present at N479. A disulfide bond links C485 and C494. N-linked (GlcNAc...) asparagine glycans are attached at residues N496, N517, N537, N626, and N660. Intrachain disulfides connect C500-C556 and C622-C627. C698 and C712 are disulfide-bonded. Residues N746 and N857 are each glycosylated (N-linked (GlcNAc...) asparagine). Disulfide bonds link C853/C889 and C896/C901. Residues 975–998 traverse the membrane as a helical segment; sequence IYMIIGISLLLGILLFSLLTYILW. The Cytoplasmic portion of the chain corresponds to 999–1032; it reads KVGFFRRKYQPIGTEETSRRESWNYLNKDEKEVK. A GFFKR motif motif is present at residues 1001 to 1005; the sequence is GFFRR.

It belongs to the integrin alpha chain family. As to quaternary structure, heterodimer of an alpha and a beta subunit.

It is found in the membrane. Its function is as follows. Fibronectin and V-CAM adhesion receptor. This is Integrin alpha-4 (itga4) from Xenopus laevis (African clawed frog).